We begin with the raw amino-acid sequence, 61 residues long: UPF0434 protein PA14_25520 (61 aa).

The protein belongs to the UPF0434 family.

The polypeptide is UPF0434 protein PA14_25520 (Pseudomonas aeruginosa (strain UCBPP-PA14)).